The following is a 265-amino-acid chain: MPTAPFTVLIPARLASSRLPGKPLADIAGLPMVVRVAQRAGLSGATRCVVAADDESIVAACAAHGVAAVLTRSDHASGSDRLAEACELLGLDGDDIVVNVQGDEPLIAPDLIDAVAALLPQQPSASMGTAAHAIDSLADFTNPNVVKVVCDAQGMAHYFSRAPIPFAREHAGQAWWEAASAAASAAPGHPGFAPLRHIGIYSYRAGFLRSFPQLSPAPTEVLEALEQLRALWHGHRIAVHLTPHAPGPGVDTPEDLERVRARLSA.

The protein belongs to the KdsB family.

The protein localises to the cytoplasm. The enzyme catalyses 3-deoxy-alpha-D-manno-oct-2-ulosonate + CTP = CMP-3-deoxy-beta-D-manno-octulosonate + diphosphate. It participates in nucleotide-sugar biosynthesis; CMP-3-deoxy-D-manno-octulosonate biosynthesis; CMP-3-deoxy-D-manno-octulosonate from 3-deoxy-D-manno-octulosonate and CTP: step 1/1. It functions in the pathway bacterial outer membrane biogenesis; lipopolysaccharide biosynthesis. Functionally, activates KDO (a required 8-carbon sugar) for incorporation into bacterial lipopolysaccharide in Gram-negative bacteria. This Delftia acidovorans (strain DSM 14801 / SPH-1) protein is 3-deoxy-manno-octulosonate cytidylyltransferase.